The sequence spans 37 residues: Large ribosomal subunit protein bL36 (37 aa).

The protein belongs to the bacterial ribosomal protein bL36 family.

This is Large ribosomal subunit protein bL36 from Trichodesmium erythraeum (strain IMS101).